Here is a 242-residue protein sequence, read N- to C-terminus: UPF0246 protein SP_1547 (242 aa).

It belongs to the UPF0246 family.

The sequence is that of UPF0246 protein SP_1547 from Streptococcus pneumoniae serotype 4 (strain ATCC BAA-334 / TIGR4).